The sequence spans 100 residues: Urease subunit gamma (100 aa).

It belongs to the urease gamma subunit family. Heterotrimer of UreA (gamma), UreB (beta) and UreC (alpha) subunits. Three heterotrimers associate to form the active enzyme.

It localises to the cytoplasm. It catalyses the reaction urea + 2 H2O + H(+) = hydrogencarbonate + 2 NH4(+). The protein operates within nitrogen metabolism; urea degradation; CO(2) and NH(3) from urea (urease route): step 1/1. The protein is Urease subunit gamma of Corynebacterium urealyticum (strain ATCC 43042 / DSM 7109).